We begin with the raw amino-acid sequence, 400 residues long: Integumentary mucin A.1 (400 aa).

An N-terminal signal peptide occupies residues 1–20 (MKHIILCIHFLLMVVGLGQA). 2 consecutive P-type domains span residues 21–64 (QDCS…FYNA) and 72–115 (LECS…YART). 3 disulfides stabilise this stretch: Cys23-Cys49, Cys33-Cys48, and Cys43-Cys60. Asn63 carries N-linked (GlcNAc...) asparagine glycosylation. Cystine bridges form between Cys74–Cys100, Cys84–Cys99, and Cys94–Cys111. Low complexity-rich tracts occupy residues 122–264 (PDTT…DTTP) and 272–299 (ETTTETTTETTTETTTETTTETTTETTT). A disordered region spans residues 122 to 302 (PDTTTASTTA…TTTETTTAPP (181 aa)). 14 tandem repeats follow at residues 127 to 135 (ASTTAETTT), 136 to 144 (VPTTPETTT), 145 to 153 (VPTTPETTT), 154 to 162 (VPTTPETTT), 163 to 171 (VPTTPETTT), 172 to 180 (VPTTPETTT), 181 to 189 (VPTTPETTT), 190 to 198 (VPTTPETTT), 199 to 207 (VPTTPETTT), 208 to 216 (VPTTPETTT), 217 to 225 (VPTTPETTT), 226 to 234 (VPTTPETTT), 235 to 243 (ASTTAETTT), and 244 to 252 (VPTTPETTT). Positions 127–261 (ASTTAETTTV…TEPTTTPTTD (135 aa)) are 15 X 9 AA approximate tandem repeats of [AV]-[SP]-T-T-[AP]-E-T-T-T. The stretch at 253 to 261 (EPTTTPTTD) is one 1-15; approximate repeat. 7 repeat units span residues 272–275 (ETTT), 276–279 (ETTT), 280–283 (ETTT), 284–287 (ETTT), 288–291 (ETTT), 292–295 (ETTT), and 296–299 (ETTT). Positions 272-299 (ETTTETTTETTTETTTETTTETTTETTT) are 7 X 4 AA repeats of E-T-T-T. 2 P-type domains span residues 298 to 343 (TTAP…FYTE) and 351 to 394 (AECT…FEKA). Disulfide bonds link Cys312–Cys327, Cys322–Cys339, Cys353–Cys379, Cys363–Cys378, and Cys373–Cys390.

Extensively O-glycosylated. Consist of about 70% carbohydrate and 30% protein. As to expression, expressed and stored exclusively in mature mucous glands of the skin.

The protein resides in the secreted. Its function is as follows. Could be involved in defense against microbial infections. Protects the epithelia from external environment. The polypeptide is Integumentary mucin A.1 (Xenopus laevis (African clawed frog)).